The following is a 131-amino-acid chain: D-ribose pyranase (131 aa).

H20 serves as the catalytic Proton donor. Residues D28, H98, and 120–122 (YAN) contribute to the substrate site.

The protein belongs to the RbsD / FucU family. RbsD subfamily. As to quaternary structure, homodecamer.

The protein resides in the cytoplasm. It carries out the reaction beta-D-ribopyranose = beta-D-ribofuranose. Its pathway is carbohydrate metabolism; D-ribose degradation; D-ribose 5-phosphate from beta-D-ribopyranose: step 1/2. Catalyzes the interconversion of beta-pyran and beta-furan forms of D-ribose. In Clostridium perfringens (strain ATCC 13124 / DSM 756 / JCM 1290 / NCIMB 6125 / NCTC 8237 / Type A), this protein is D-ribose pyranase.